A 537-amino-acid chain; its full sequence is O-phosphoserine--tRNA(Cys) ligase (537 aa).

Residues His-186–Thr-188, Ser-231–Ser-233, Tyr-273–Tyr-274, and Asn-317 each bind substrate.

This sequence belongs to the class-II aminoacyl-tRNA synthetase family. O-phosphoseryl-tRNA(Cys) synthetase subfamily. Homotetramer. Interacts with SepCysS.

It carries out the reaction tRNA(Cys) + O-phospho-L-serine + ATP = O-phospho-L-seryl-tRNA(Cys) + AMP + diphosphate. Functionally, catalyzes the attachment of O-phosphoserine (Sep) to tRNA(Cys). The sequence is that of O-phosphoserine--tRNA(Cys) ligase from Methanococcus maripaludis (strain C5 / ATCC BAA-1333).